The sequence spans 606 residues: Sulfite reductase [NADPH] flavoprotein alpha-component (606 aa).

A Flavodoxin-like domain is found at V64–V202. Residues S70–A75, S117–G120, and L153–C162 contribute to the FMN site. Positions Q212–T234 are enriched in low complexity. Residues Q212–V235 are disordered. The FAD-binding FR-type domain maps to T241–P455. FAD-binding positions include T329, K363, R393–S396, T411–G413, Y417, and G426–S429. Residues S526 to R527, K532 to Q536, and D568 contribute to the NADP(+) site. Y606 serves as a coordination point for FAD.

The protein belongs to the NADPH-dependent sulphite reductase flavoprotein subunit CysJ family. It in the N-terminal section; belongs to the flavodoxin family. In the C-terminal section; belongs to the flavoprotein pyridine nucleotide cytochrome reductase family. As to quaternary structure, alpha(8)-beta(8). The alpha component is a flavoprotein, the beta component is a hemoprotein. It depends on FAD as a cofactor. Requires FMN as cofactor.

The enzyme catalyses hydrogen sulfide + 3 NADP(+) + 3 H2O = sulfite + 3 NADPH + 4 H(+). Its pathway is sulfur metabolism; hydrogen sulfide biosynthesis; hydrogen sulfide from sulfite (NADPH route): step 1/1. In terms of biological role, component of the sulfite reductase complex that catalyzes the 6-electron reduction of sulfite to sulfide. This is one of several activities required for the biosynthesis of L-cysteine from sulfate. The flavoprotein component catalyzes the electron flow from NADPH -&gt; FAD -&gt; FMN to the hemoprotein component. This Yersinia pestis bv. Antiqua (strain Antiqua) protein is Sulfite reductase [NADPH] flavoprotein alpha-component.